A 145-amino-acid polypeptide reads, in one-letter code: UPF0179 protein MmarC7_0952 (145 aa).

This sequence belongs to the UPF0179 family.

This is UPF0179 protein MmarC7_0952 from Methanococcus maripaludis (strain C7 / ATCC BAA-1331).